Reading from the N-terminus, the 304-residue chain is MYYGFDMGGTKIELGVFDENLQRIWHKRVPTPREDYPQLLQILRDLTEEADTYCGVQGSVGIGIPGLPNADDGTVFTANVPSAMGQPLQADLSRLIQREVRIDNDANCFALSEAWDPEFRTYPTVLGLILGTGVGGGLIVNGSIVSGRNHITGEFGHFRLPVDALDILGADIPRVPCGCGHRGCIENYISGRGFEWMYSHFYQHTLPATDIIAHYAAGEPKAVAHVERFMDVLAVCLGNLLTMLDPHLVVVGGGLSNFEKIYQELPKRLPAHLLRVARLPRIEKARYGDSGGVRGAAFLHLAEK.

ATP is bound by residues 4-11 (GFDMGGTK) and 133-140 (GVGGGLIV). Zn(2+) contacts are provided by H157, C177, C179, and C184.

Belongs to the ROK (NagC/XylR) family. NagK subfamily.

The enzyme catalyses N-acetyl-D-glucosamine + ATP = N-acetyl-D-glucosamine 6-phosphate + ADP + H(+). The protein operates within cell wall biogenesis; peptidoglycan recycling. Functionally, catalyzes the phosphorylation of N-acetyl-D-glucosamine (GlcNAc) derived from cell-wall degradation, yielding GlcNAc-6-P. The polypeptide is N-acetyl-D-glucosamine kinase (Yersinia pseudotuberculosis serotype IB (strain PB1/+)).